The following is an 815-amino-acid chain: SNF1 protein kinase subunit beta-1 (815 aa).

Residues 1 to 11 are compositionally biased toward polar residues; it reads MGNSPSTQDPS. 2 disordered regions span residues 1–88 and 117–146; these read MGNS…TIDK and SDDHDVGAPEEQVKSPSFLSPGPSMATVKR. Residue G2 is the site of N-myristoyl glycine attachment. Residues 12 to 31 are compositionally biased toward basic and acidic residues; that stretch reads HSTKKEHGHHFHDAFNKDRQ. Positions 32–42 are enriched in polar residues; it reads GSITSQLFNNR. A Phosphoserine modification is found at S33. Basic and acidic residues-rich tracts occupy residues 72–88 and 117–129; these read PSTDCDGRMSSDTTIDK and SDDHDVGAPEEQV. 6 positions are modified to phosphoserine: S181, S198, S200, S206, S209, and S220. Disordered regions lie at residues 311–335 and 362–389; these read HANNNGNIENNTRNKGNAGGSNDDF and KHHNKTKKAQNKKIRSVSNSRRSSFASL. A compositionally biased stretch (low complexity) spans 313–326; the sequence is NNNGNIENNTRNKG. At S331 the chain carries Phosphoserine. Positions 363 to 376 are enriched in basic residues; that stretch reads HHNKTKKAQNKKIR. A compositionally biased stretch (low complexity) spans 377–389; it reads SVSNSRRSSFASL. The tract at residues 473-716 is kinase-interacting sequence (KIS); required for interaction with SNF1; sequence VSTDIASALK…LQQGGNIDAE (244 aa). Phosphoserine is present on residues S494 and S497. A disordered region spans residues 581-616; that stretch reads EPTLDEELPKRPELKRFPSSSRKSSYYSAKGVERPS. The segment covering 587 to 596 has biased composition (basic and acidic residues); the sequence is ELPKRPELKR. Low complexity predominate over residues 599 to 608; it reads SSSRKSSYYS. The residue at position 643 (S643) is a Phosphoserine. The tract at residues 724 to 804 is association with SNF1 kinase complex (ASC) domain; required for interaction with SNF4; that stretch reads SRYPVPDLPI…FITQVVYAPC (81 aa).

It belongs to the 5'-AMP-activated protein kinase beta subunit family. As to quaternary structure, component of the SNF1 kinase complex, a heterotrimeric complex composed of the catalytic alpha subunit SNF1, one of the three related beta subunits SIP1, SIP2 or GAL83, and the regulatory gamma subunit SNF4. The beta subunit serves as a bridge between the catalytic and the regulatory subunit. Interacts (via KIS domain) with SNF1. Interacts (via ASC domain) with SNF4. Phosphorylated by SNF1 in vitro.

Its subcellular location is the cytoplasm. The protein localises to the vacuole membrane. Beta subunit of the SNF1 kinase complex, which is required for transcriptional, metabolic, and developmental adaptations in response to glucose limitation. Has a structural role, mediating heterotrimer formation, and a regulatory role, defining carbon source-regulated subcellular location and substrate specificity of the SNF1 kinase complex. Promotes the PKA-regulated relocalization of the SNF1 kinase complex to the vacuolar membrane in response to various types of carbon stress. In Saccharomyces cerevisiae (strain ATCC 204508 / S288c) (Baker's yeast), this protein is SNF1 protein kinase subunit beta-1 (SIP1).